The chain runs to 724 residues: Pesticidal crystal protein Cry11Ba (724 aa).

The protein belongs to the delta endotoxin family.

Its function is as follows. Promotes colloidosmotic lysis by binding to the midgut epithelial cells of mosquitos. Active on Aedes aegypti, Culex pipiens and Anopheles stephensi larvae. The polypeptide is Pesticidal crystal protein Cry11Ba (cry11Ba) (Bacillus thuringiensis subsp. jegathesan).